A 1434-amino-acid chain; its full sequence is Receptor-type tyrosine-protein phosphatase U (1434 aa).

The first 17 residues, 1–17 (MRSARALLLALALRVCA), serve as a signal peptide directing secretion. Residues 18–748 (LDSETPSAGC…QHSEEMGLIL (731 aa)) are Extracellular-facing. Residues 25-187 (AGCTFEEDDD…ILLLNYPCSK (163 aa)) form the MAM domain. Asn-74 carries N-linked (GlcNAc...) asparagine glycosylation. The Ig-like C2-type domain occupies 189 to 274 (PHFSRLGDVE…TQSSRGSGVS (86 aa)). A disulfide bridge connects residues Cys-209 and Cys-263. Fibronectin type-III domains lie at 287–382 (PIAP…CAEP), 385–483 (APKG…TDED), 484–590 (VPGG…SAPT), and 597–677 (PSPL…TEAK). Residue Asn-409 is glycosylated (N-linked (GlcNAc...) asparagine). N-linked (GlcNAc...) asparagine glycosylation is present at Asn-684. Residues 749-769 (GICAGGLVVLIILLGAIIVVI) form a helical membrane-spanning segment. At 770 to 1434 (RKGKPVNMTK…LEYLESLETR (665 aa)) the chain is on the cytoplasmic side. Polar residues predominate over residues 824–839 (RGDQRSSVVNESSSLL). A disordered region spans residues 824-851 (RGDQRSSVVNESSSLLGGSPRRQCGRKG). Tyrosine-protein phosphatase domains lie at 876 to 1132 (KTAE…ILEA) and 1164 to 1427 (LREE…ALEY). Substrate is bound by residues Glu-1041, 1073 to 1079 (CSAGTGR), and Gln-1117. The active-site Phosphocysteine intermediate is the Cys-1073. Cys-1368 acts as the Phosphocysteine intermediate in catalysis.

It belongs to the protein-tyrosine phosphatase family. Receptor class 2B subfamily.

It is found in the cell junction. The protein localises to the cell membrane. The enzyme catalyses O-phospho-L-tyrosyl-[protein] + H2O = L-tyrosyl-[protein] + phosphate. Tyrosine-protein phosphatase which dephosphorylates CTNNB1. May function in cell proliferation and migration and play a role in the maintenance of epithelial integrity. This is Receptor-type tyrosine-protein phosphatase U (PTPRU) from Gallus gallus (Chicken).